A 148-amino-acid polypeptide reads, in one-letter code: Probable calcium-binding protein CML14 (148 aa).

EF-hand domains follow at residues 9–44 (DQVSSMKEAFMLFDTDGDGKIAPSELGILMRSLGGN), 80–115 (PFDRQLRDAFKVLDKEGTGFVAVADLRHILTSIGEK), and 116–148 (LQPSEFDEWIKEVDVGSDGKIRYEDFIARMVAK). Positions 22, 24, 26, 28, and 33 each coordinate Ca(2+).

Potential calcium sensor. This chain is Probable calcium-binding protein CML14 (CML14), found in Arabidopsis thaliana (Mouse-ear cress).